A 247-amino-acid chain; its full sequence is Large ribosomal subunit protein uL30 (247 aa).

M1 bears the N-acetylmethionine mark. 4 tandem repeats follow at residues 7-17 (KKKVPAVPETL), 18-29 (KKKRRNFAELKI), 30-41 (KRLRKKFAQKML), and 42-53 (RKARRKLIYEKA). A 4 X 12 AA tandem repeats region spans residues 7 to 53 (KKKVPAVPETLKKKRRNFAELKIKRLRKKFAQKMLRKARRKLIYEKA). The residue at position 16 (T16) is a Phosphothreonine. K123 is modified (N6-acetyllysine). K126 carries the N6-succinyllysine modification. Position 138 is a phosphotyrosine (Y138).

It belongs to the universal ribosomal protein uL30 family. Component of the large ribosomal subunit. Homodimer. Interacts with DHX33.

It localises to the cytoplasm. In terms of biological role, component of the large ribosomal subunit. The ribosome is a large ribonucleoprotein complex responsible for the synthesis of proteins in the cell. Binds to G-rich structures in 28S rRNA and in mRNAs. Plays a regulatory role in the translation apparatus; inhibits cell-free translation of mRNAs. In Pongo abelii (Sumatran orangutan), this protein is Large ribosomal subunit protein uL30 (RPL7).